Consider the following 670-residue polypeptide: Solute carrier organic anion transporter family member 1A6 (670 aa).

Residues 1 to 20 (MGEPGKRVGIHRVRCFAKIK) lie on the Cytoplasmic side of the membrane. The chain crosses the membrane as a helical span at residues 21-40 (VFLLALIWAYISKILSGVYM). Over 41–59 (STMLTQLERQFNISTSIVG) the chain is Extracellular. Asn52 is a glycosylation site (N-linked (GlcNAc...) asparagine). Residues 60–80 (LINGSFEMGNLLVIVFVSYFG) traverse the membrane as a helical segment. At 81–86 (TKLHRP) the chain is on the cytoplasmic side. Residues 87–111 (IMIGVGCAVMGLGCFIISLPHFLMG) form a helical membrane-spanning segment. The Extracellular portion of the chain corresponds to 112 to 155 (RYEYETTISPTSNLSSNSFLCVENRSQTLKPTQDPAECVKEIKS). Asn124 and Asn135 each carry an N-linked (GlcNAc...) asparagine glycan. Residues 156 to 184 (LMWIYVLVGNIIRGIGETPIMPLGISYIE) traverse the membrane as a helical segment. Topologically, residues 185–203 (DFAKSENSPLYIGILEVGK) are cytoplasmic. Residues 204-224 (MIGPILGYLMGPFCANIYVDT) traverse the membrane as a helical segment. The Extracellular portion of the chain corresponds to 225–242 (GSVNTDDLTITPTDTRWV). A helical membrane pass occupies residues 243 to 267 (GAWWIGFLVCAGVNVLTSIPFFFFP). The Cytoplasmic portion of the chain corresponds to 268 to 311 (KTLPKEGLQDNGDGTENAKEEKHRDKAKEENQGIIKEFFLMMKN). Residues 312 to 333 (LFCNPIYMLCVLTSVLQVNGVA) form a helical membrane-spanning segment. The Extracellular segment spans residues 334-353 (NIVIYKPKYLEHHFGISTAK). A helical transmembrane segment spans residues 354 to 377 (AVFLIGLYTTPSVSAGYLISGFIM). The Cytoplasmic portion of the chain corresponds to 378 to 381 (KKLK). The helical transmembrane segment at 382 to 405 (ITLKKAAIIALCLFMSECLLSLCN) threads the bilayer. The Extracellular segment spans residues 406 to 513 (FMLTCDTTPI…PDCANKLQYF (108 aa)). In terms of domain architecture, Kazal-like spans 433–488 (NKFLSDCNTRCNCLTKTWDPVCGNNGLAYMSPCLAGCEKSVGTGANMVFQNCSCIR). 3 cysteine pairs are disulfide-bonded: Cys439–Cys469, Cys445–Cys465, and Cys454–Cys486. N-linked (GlcNAc...) asparagine glycans are attached at residues Asn483 and Asn492. The chain crosses the membrane as a helical span at residues 514 to 536 (LIITVFCCFFYSLATIPGYMVFL). The Cytoplasmic portion of the chain corresponds to 537–545 (RCMKSEEKS). A helical transmembrane segment spans residues 546–571 (LGIGLQAFFMRLFAGIPAPIYFGALI). The Extracellular segment spans residues 572–605 (DRTCLHWGTLKCGEPGACRTYEVSSFRRLYLGLP). The helical transmembrane segment at 606–623 (AALRGSIILPSFFILRLI) threads the bilayer. The Cytoplasmic portion of the chain corresponds to 624–670 (RKLQIPGDTDSSEIELAETKPTEKESECTDMHKSSKVENDGELKTKL). Residue Thr632 is modified to Phosphothreonine. A disordered region spans residues 633–670 (DSSEIELAETKPTEKESECTDMHKSSKVENDGELKTKL). 2 positions are modified to phosphoserine: Ser634 and Ser635. Residues 640 to 670 (AETKPTEKESECTDMHKSSKVENDGELKTKL) show a composition bias toward basic and acidic residues.

This sequence belongs to the organo anion transporter (TC 2.A.60) family. As to expression, kidney specific.

It is found in the cell membrane. Functionally, may mediate the Na(+)-independent transport of organic anions. The protein is Solute carrier organic anion transporter family member 1A6 (Slco1a6) of Mus musculus (Mouse).